Here is a 500-residue protein sequence, read N- to C-terminus: Putative DNA recombinase (500 aa).

Residues 1–144 (MIAIYVRVST…SGRLQKMKKG (144 aa)) enclose the Resolvase/invertase-type recombinase catalytic domain. Ser9 serves as the catalytic O-(5'-phospho-DNA)-serine intermediate. The segment at residues 152–288 (LYGYKFVKEK…QELLGQSKRK (137 aa)) is a DNA-binding region (recombinase). Residues 372 to 448 (KEAEQSNHLS…IQSKMKVLDD (77 aa)) are a coiled coil.

In the N-terminal section; belongs to the site-specific recombinase resolvase family.

Its function is as follows. Putative site-specific recombinase having a very important role in sporulation. It probably plays a role in the recombination of SpoIIIC and SpoIVCB to form sigma K factor. This is Putative DNA recombinase (cisA) from Bacillus subtilis (strain 168).